We begin with the raw amino-acid sequence, 542 residues long: Signal peptide peptidase-like 5 (542 aa).

A signal peptide spans 1-23 (MAAATAAVFALLMASALAGAAAG). Topologically, residues 24 to 192 (GDIVHHDDEA…PDRPVVDTAE (169 aa)) are lumenal. 2 N-linked (GlcNAc...) asparagine glycosylation sites follow: asparagine 79 and asparagine 145. The region spanning 92-167 (CTSPKEKVSG…LPRDAGFALH (76 aa)) is the PA domain. The helical transmembrane segment at 193 to 213 (VFLWLMAVGTVLCASYWSAWS) threads the bilayer. Topologically, residues 214 to 245 (AREALCEQEKLLKDGREVLLNVENGSSSGMID) are cytoplasmic. The chain crosses the membrane as a helical span at residues 246 to 266 (INVASAIMFVVVASCFLIMLY). Residues 267-275 (KMMSSWFVE) are Lumenal-facing. The chain crosses the membrane as a helical span at residues 276–296 (LLVVIFCVGGVEGLQTCLVAL). The Cytoplasmic portion of the chain corresponds to 297–316 (LSRWFRAASESFFKVPFFGA). Residues 317 to 337 (VSYLTLAVSPFCIVFAVLWAV) form a helical membrane-spanning segment. The Lumenal portion of the chain corresponds to 338–342 (HRHFT). A helical membrane pass occupies residues 343-363 (YAWIGQDILGIALIITVIQIV). Over 364 to 367 (RVPN) the chain is Cytoplasmic. A helical transmembrane segment spans residues 368–388 (LKVGSVLLSCAFFYDIFWVFV). Aspartate 382 is an active-site residue. The Lumenal segment spans residues 389–426 (SKRWFHESVMIVVARGDKTDEDGVPMLLKIPRMFDPWG). A helical membrane pass occupies residues 427 to 447 (GYSIIGFGDILLPGLLVAFAL). Residue aspartate 435 is part of the active site. The Cytoplasmic segment spans residues 448–459 (RYDWAAKKSLQT). Residues 460-480 (GYFLWSMVAYGSGLLITYVAL) traverse the membrane as a helical segment. Topologically, residues 481 to 486 (NLMDGH) are lumenal. A helical transmembrane segment spans residues 487-507 (GQPALLYIVPFTLGALISLGW). The PAL signature appears at 489–491 (PAL). Over 508–542 (KRGELWNLWSKGEPERVCPHHMHMQPQPKTPPLVQ) the chain is Cytoplasmic.

This sequence belongs to the peptidase A22B family. Post-translationally, glycosylated.

The protein resides in the endosome membrane. Functionally, intramembrane-cleaving aspartic protease (I-CLiP) that cleaves type II membrane signal peptides in the hydrophobic plane of the membrane. This Oryza sativa subsp. japonica (Rice) protein is Signal peptide peptidase-like 5 (SPPL5).